The chain runs to 346 residues: Phosphate acyltransferase (346 aa).

This sequence belongs to the PlsX family. Homodimer. Probably interacts with PlsY.

The protein localises to the cytoplasm. It catalyses the reaction a fatty acyl-[ACP] + phosphate = an acyl phosphate + holo-[ACP]. It participates in lipid metabolism; phospholipid metabolism. Functionally, catalyzes the reversible formation of acyl-phosphate (acyl-PO(4)) from acyl-[acyl-carrier-protein] (acyl-ACP). This enzyme utilizes acyl-ACP as fatty acyl donor, but not acyl-CoA. The polypeptide is Phosphate acyltransferase (Brucella ovis (strain ATCC 25840 / 63/290 / NCTC 10512)).